We begin with the raw amino-acid sequence, 450 residues long: Histidinol dehydrogenase (450 aa).

Positions 135, 197, and 225 each coordinate NAD(+). T248, Q270, and H273 together coordinate substrate. Positions 270 and 273 each coordinate Zn(2+). Active-site proton acceptor residues include E339 and H340. Positions 340, 373, 427, and 432 each coordinate substrate. Zn(2+) is bound at residue D373. H432 lines the Zn(2+) pocket.

This sequence belongs to the histidinol dehydrogenase family. Zn(2+) is required as a cofactor.

The catalysed reaction is L-histidinol + 2 NAD(+) + H2O = L-histidine + 2 NADH + 3 H(+). Its pathway is amino-acid biosynthesis; L-histidine biosynthesis; L-histidine from 5-phospho-alpha-D-ribose 1-diphosphate: step 9/9. In terms of biological role, catalyzes the sequential NAD-dependent oxidations of L-histidinol to L-histidinaldehyde and then to L-histidine. In Corynebacterium jeikeium (strain K411), this protein is Histidinol dehydrogenase.